The sequence spans 146 residues: Large ribosomal subunit protein uL15 (146 aa).

Basic and acidic residues predominate over residues 1 to 13; the sequence is MKLHELKPAEGSR. Positions 1 to 47 are disordered; that stretch reads MKLHELKPAEGSRKSRKRIGRGTGSGLGRNAGKGEKGQKARAGGGVR. A compositionally biased stretch (gly residues) spans 21–31; sequence RGTGSGLGRNA.

The protein belongs to the universal ribosomal protein uL15 family. In terms of assembly, part of the 50S ribosomal subunit.

Its function is as follows. Binds to the 23S rRNA. This chain is Large ribosomal subunit protein uL15, found in Clostridium kluyveri (strain NBRC 12016).